The primary structure comprises 596 residues: Merlin (596 aa).

At serine 13 the chain carries Phosphoserine. The region spanning 22-311 (FTVRIVTMDA…GNHDLFMRRR (290 aa)) is the FERM domain. A Phosphoserine; by PAK modification is found at serine 518. Residues 560–580 (VLHSESSDRGGPSSKHNTIKK) are disordered.

Interacts with NHERF1, HGS and AGAP2. Interacts with SGSM3. Interacts (via FERM domain) with MPP1. Interacts with LAYN. Interacts with WWC1. Interacts with the CUL4A-RBX1-DDB1-VprBP/DCAF1 E3 ubiquitin-protein ligase complex. The unphosphorylated form interacts (via FERM domain) with VPRBP/DCAF1. Interacts (via FERM domain) with NOP53; the interaction is direct. Interacts with SCHIP1; the interaction is direct. Post-translationally, phosphorylation of Ser-518 inhibits nuclear localization by disrupting the intramolecular association of the FERM domain with the C-terminal tail. The dephosphorylation of Ser-518 favors the interaction with NOP53. In terms of processing, ubiquitinated by the CUL4A-RBX1-DDB1-DCAF1/VprBP E3 ubiquitin-protein ligase complex for ubiquitination and subsequent proteasome-dependent degradation.

The protein resides in the cell membrane. It localises to the cell projection. It is found in the cytoplasm. Its subcellular location is the cytoskeleton. The protein localises to the nucleus. In terms of biological role, probable regulator of the Hippo/SWH (Sav/Wts/Hpo) signaling pathway, a signaling pathway that plays a pivotal role in tumor suppression by restricting proliferation and promoting apoptosis. Along with WWC1 can synergistically induce the phosphorylation of LATS1 and LATS2 and can probably function in the regulation of the Hippo/SWH (Sav/Wts/Hpo) signaling pathway. May act as a membrane stabilizing protein. May inhibit PI3 kinase by binding to AGAP2 and impairing its stimulating activity. Suppresses cell proliferation and tumorigenesis by inhibiting the CUL4A-RBX1-DDB1-VprBP/DCAF1 E3 ubiquitin-protein ligase complex. Plays a role in lens development and is required for complete fiber cell terminal differentiation, maintenance of cell polarity and separation of the lens vesicle from the corneal epithelium. In Mus musculus (Mouse), this protein is Merlin (Nf2).